An 84-amino-acid polypeptide reads, in one-letter code: Small ribosomal subunit protein bS16c (84 aa).

Belongs to the bacterial ribosomal protein bS16 family.

The protein resides in the plastid. Its subcellular location is the chloroplast. The sequence is that of Small ribosomal subunit protein bS16c from Anthoceros angustus (Hornwort).